The chain runs to 253 residues: 5-oxoprolinase subunit A (253 aa).

The protein belongs to the LamB/PxpA family. As to quaternary structure, forms a complex composed of PxpA, PxpB and PxpC.

The catalysed reaction is 5-oxo-L-proline + ATP + 2 H2O = L-glutamate + ADP + phosphate + H(+). Catalyzes the cleavage of 5-oxoproline to form L-glutamate coupled to the hydrolysis of ATP to ADP and inorganic phosphate. This chain is 5-oxoprolinase subunit A, found in Bacillus thuringiensis subsp. konkukian (strain 97-27).